The following is a 463-amino-acid chain: L-seryl-tRNA(Sec) selenium transferase (463 aa).

At Lys-295 the chain carries N6-(pyridoxal phosphate)lysine.

Belongs to the SelA family. In terms of assembly, homodecamer; pentamer of dimers. Binds only one seryl-tRNA(Sec) per dimer. It depends on pyridoxal 5'-phosphate as a cofactor.

The protein localises to the cytoplasm. It catalyses the reaction L-seryl-tRNA(Sec) + selenophosphate + H(+) = L-selenocysteinyl-tRNA(Sec) + phosphate. Its pathway is aminoacyl-tRNA biosynthesis; selenocysteinyl-tRNA(Sec) biosynthesis; selenocysteinyl-tRNA(Sec) from L-seryl-tRNA(Sec) (bacterial route): step 1/1. Its function is as follows. Converts seryl-tRNA(Sec) to selenocysteinyl-tRNA(Sec) required for selenoprotein biosynthesis. The protein is L-seryl-tRNA(Sec) selenium transferase of Shigella sonnei (strain Ss046).